Here is a 244-residue protein sequence, read N- to C-terminus: Cobalt transport protein CbiM (244 aa).

An N-terminal signal peptide occupies residues 1-28 (MKKLWKFIPFVLMGVIYFTLTNPESAHA). The next 6 membrane-spanning stretches (helical) occupy residues 37-57 (PVKW…LGLI), 71-91 (LLLA…IPSV), 103-123 (LATV…VLLF), 135-155 (TLGA…FVVY), 166-186 (SVSI…TTSV), and 206-226 (FMAI…LLTV).

The protein belongs to the CbiM family. As to quaternary structure, forms an energy-coupling factor (ECF) transporter complex composed of an ATP-binding protein (A component, CbiO), a transmembrane protein (T component, CbiQ) and 2 possible substrate-capture proteins (S components, CbiM and CbiN) of unknown stoichimetry.

It is found in the cell membrane. It functions in the pathway cofactor biosynthesis; adenosylcobalamin biosynthesis. Its function is as follows. Part of the energy-coupling factor (ECF) transporter complex CbiMNOQ involved in cobalt import. In Listeria seeligeri serovar 1/2b (strain ATCC 35967 / DSM 20751 / CCM 3970 / CCUG 15530 / CIP 100100 / LMG 11386 / NCTC 11856 / SLCC 3954 / 1120), this protein is Cobalt transport protein CbiM.